The sequence spans 233 residues: 7-cyano-7-deazaguanine synthase (233 aa).

11-21 (FSGGQDSTTCL) contacts ATP. Zn(2+) is bound by residues C199, C214, C217, and C220.

It belongs to the QueC family. Requires Zn(2+) as cofactor.

It catalyses the reaction 7-carboxy-7-deazaguanine + NH4(+) + ATP = 7-cyano-7-deazaguanine + ADP + phosphate + H2O + H(+). It participates in purine metabolism; 7-cyano-7-deazaguanine biosynthesis. Catalyzes the ATP-dependent conversion of 7-carboxy-7-deazaguanine (CDG) to 7-cyano-7-deazaguanine (preQ(0)). The polypeptide is 7-cyano-7-deazaguanine synthase (Herminiimonas arsenicoxydans).